A 523-amino-acid polypeptide reads, in one-letter code: MEELQGYLEKDRSGQQHFLYPLLFQEYIYALAHDHGLNSSIFYEPVEIFGYDNKSSLALVKRLITRIYQQNFLISSVNDSNQNRFLEHNRFFYSQFYSQIISESVAIYVEIPFSRRLVSFFXEKEIPKYHNLRSIHSIFPFLEDKLSHLNYVSEILIPXPXHIGILGQILQCQIQDVPFLHLLRFFLDEYHNWNSLFITQNKSIYVFSKENKRLFRLLYNSYVFECEFFLLFFRKQSYYLRLTSSEIFLERTHFYRKIEQLRIELEHFVVVCRNYFHRTLWFLKNPFMHYVRYQRKAILASRGTHFLMKKWKYYFVNFWQYYFHFWSRPYRININHLSNYSFYFLGYFSSLLKNSLAVRNQMLENSFLIDTITKKFDTRVPVILLIGSLSKAKFCTVSGHPISKPIWADLSDSDIIDRFGRICRNLSHYHSGSSKKQDLYRIKYILRLSCARTLARKHKSTVRTFLRRLGSGLLEEFFTEEEQVLSLIFSKTTPFTLHGXHRARIWYLDIIRINDLVNHSXLS.

The protein belongs to the intron maturase 2 family. MatK subfamily.

It is found in the plastid. Its subcellular location is the chloroplast. Usually encoded in the trnK tRNA gene intron. Probably assists in splicing its own and other chloroplast group II introns. In Asphodeline lutea (King's spear), this protein is Maturase K.